Consider the following 1189-residue polypeptide: Origin recognition complex subunit 1 (1189 aa).

Residues 1-53 form a required for peripherial nuclear localization region; that stretch reads MTPKKKIFQNFQANDNEILSPTKKGIKLNVSKLNILNFENTIITKEKTNYEYK. A Phosphothreonine modification is found at threonine 2. Serine 20 is modified (phosphoserine). Leucine heptad repeat repeat units lie at residues 137 to 143, 144 to 150, 151 to 157, and 158 to 164; these read LTNISSS and LSNSLDE. Basic residues predominate over residues 239-248; sequence KKNISKKNTH. 2 disordered regions span residues 239 to 421 and 679 to 749; these read KKNI…DHTD and DTQA…QSSL. The segment covering 254–279 has biased composition (basic and acidic residues); the sequence is QNDKNKEKNKEKDKNIKKDRDKDIQT. Over residues 304–320 the composition is skewed to low complexity; sequence NNDNVKNNLKNNINNNN. The span at 321–339 shows a compositional bias: polar residues; sequence TLKRSSQSVRIDSDLSSAH. The segment covering 353–381 has biased composition (low complexity); that stretch reads HRNNNNNNNNNNKTTSNNHNKNNKINNNN. The span at 385 to 394 shows a compositional bias: basic and acidic residues; it reads NYKKQTDTKH. Low complexity predominate over residues 395–411; it reads TNNTQNNKYNKTKTTNT. A compositionally biased stretch (polar residues) spans 695–709; that stretch reads KAQTTTNVKANTHTK. Basic and acidic residues-rich tracts occupy residues 710–724 and 733–742; these read TLND…KNKE and DVKKKSDPHN. Residues valine 780 and 815–823 each bind ATP; that span reads GMPGTGKTA. Residues aspartate 903 and glutamate 904 each coordinate Mg(2+). Residue glutamate 904 participates in ATP binding. The short motif at 913-922 is the PIP-box element; it reads QKVLFTLFDW. The ATP site is built by asparagine 937 and arginine 1003.

The protein belongs to the ORC1 family. As to quaternary structure, component of the origin recognition complex (ORC). Interacts (via PIP-box) with PCNA1; the interaction occurs during DNA replication in trophozoites. In schizonts, may be phosphorylated by PK5; phosphorylation leads to ORC1 dissociation from the telomeres and var gene promoters, translocation to the cytoplasm, where it is degraded by the proteasome.

Its subcellular location is the nucleus. It is found in the chromosome. The protein localises to the telomere. It localises to the nucleolus. The enzyme catalyses ATP + H2O = ADP + phosphate + H(+). In terms of biological role, component of the origin recognition complex (ORC) that binds origins of replication and thus may regulate the initiation of DNA replication. DNA-binding may not be ATP-dependent. In a SIR2A/Sir2-dependent manner, binds to and silences telomers and subtelomeric repeat regions (TAREs). In a SIR2A/Sir2-dependent manner, binds to promoters of var genes localized next to TAREs resulting in their silencing. The protein is Origin recognition complex subunit 1 of Plasmodium falciparum (isolate 3D7).